A 148-amino-acid polypeptide reads, in one-letter code: ATP synthase epsilon chain (148 aa).

It belongs to the ATPase epsilon chain family. F-type ATPases have 2 components, CF(1) - the catalytic core - and CF(0) - the membrane proton channel. CF(1) has five subunits: alpha(3), beta(3), gamma(1), delta(1), epsilon(1). CF(0) has three main subunits: a, b and c.

Its subcellular location is the cell membrane. Its function is as follows. Produces ATP from ADP in the presence of a proton gradient across the membrane. The protein is ATP synthase epsilon chain of Streptococcus thermophilus (strain ATCC BAA-250 / LMG 18311).